Consider the following 2555-residue polypeptide: Neurogenic locus notch homolog protein 1 (2555 aa).

The signal sequence occupies residues Met1–Ala18. Topologically, residues Ala19 to His1735 are extracellular. 4 consecutive EGF-like domains span residues Arg20–Gln58, Asp59–Leu99, Leu102–Gln139, and Gln140–Arg176. Cystine bridges form between Cys24/Cys37, Cys31/Cys46, Cys48/Cys57, Cys63/Cys74, Cys68/Cys87, Cys89/Cys98, Cys106/Cys117, Cys111/Cys127, Cys129/Cys138, Cys144/Cys155, Cys149/Cys164, Cys166/Cys175, Cys182/Cys195, Cys189/Cys204, Cys206/Cys215, Cys222/Cys233, Cys227/Cys243, Cys245/Cys254, Cys261/Cys272, Cys266/Cys281, Cys283/Cys292, Cys299/Cys312, Cys306/Cys321, Cys323/Cys332, Cys339/Cys350, Cys344/Cys359, Cys361/Cys370, Cys376/Cys387, Cys381/Cys398, Cys400/Cys409, Cys416/Cys429, Cys423/Cys438, and Cys440/Cys449. A glycan (N-linked (GlcNAc...) asparagine) is linked at Asn41. A glycan (O-linked (Glc...) serine) is linked at Ser65. O-linked (Fuc...) threonine glycosylation is present at Thr73. Thr116 carries an O-linked (Fuc...) threonine glycan. Ser146 carries an O-linked (Glc...) serine glycan. Positions Asp178–Glu216 constitute an EGF-like 5; calcium-binding domain. Thr194 carries an O-linked (Fuc...) threonine glycan. Residues Pro218 to Glu255 enclose the EGF-like 6 domain. An O-linked (Fuc...) threonine; alternate glycan is attached at Thr232. Thr232 carries O-linked (GalNAc...) threonine; alternate glycosylation. The 37-residue stretch at Asn257–Thr293 folds into the EGF-like 7; calcium-binding domain. The 39-residue stretch at Asp295–Ser333 folds into the EGF-like 8; calcium-binding domain. Thr311 carries an O-linked (Fuc...) threonine glycan. The EGF-like 9; calcium-binding domain occupies Asn335–His371. Ser341 carries an O-linked (Glc...) serine glycan. An O-linked (Fuc...) threonine glycan is attached at Thr349. The 39-residue stretch at Leu372 to Ser410 folds into the EGF-like 10 domain. O-linked (Glc...) serine glycosylation is present at Ser378. The EGF-like 11; calcium-binding domain maps to Asp412–Glu450. Residues Ala420–Asn421 are interaction with DLL4. Residues Thr432 and Ser435 each contribute to the Ca(2+) site. Residue Ser435 is glycosylated (O-linked (Glc...) serine). Positions Arg448–Asp452 are interaction with DLL4. Ca(2+) contacts are provided by Asp452, Val453, and Glu455. The region spanning Asp452–Glu488 is the EGF-like 12; calcium-binding domain. 3 disulfide bridges follow: Cys456–Cys467, Cys461–Cys476, and Cys478–Cys487. Ser458 carries O-linked (Glc...) serine glycosylation. The O-linked (Fuc...) threonine glycan is linked to Thr466. The Ca(2+) site is built by Asp469 and Gln470. Residues Asn490, Thr491, and Glu493 each coordinate Ca(2+). The 37-residue stretch at Asn490–Gln526 folds into the EGF-like 13; calcium-binding domain. Intrachain disulfides connect Cys494–Cys505, Cys499–Cys514, Cys516–Cys525, Cys532–Cys543, Cys537–Cys552, Cys554–Cys563, Cys570–Cys580, Cys575–Cys589, Cys591–Cys600, Cys607–Cys618, Cys612–Cys627, Cys629–Cys638, Cys645–Cys655, Cys650–Cys664, Cys666–Cys675, Cys682–Cys693, Cys687–Cys702, Cys704–Cys713, Cys720–Cys730, Cys725–Cys739, Cys741–Cys750, Cys757–Cys768, Cys762–Cys777, Cys779–Cys788, Cys795–Cys806, Cys800–Cys815, Cys817–Cys826, Cys833–Cys844, Cys838–Cys855, Cys857–Cys866, Cys873–Cys884, Cys878–Cys893, Cys895–Cys904, Cys911–Cys922, Cys916–Cys931, Cys933–Cys942, Cys949–Cys960, Cys954–Cys969, Cys971–Cys980, Cys987–Cys998, Cys992–Cys1007, Cys1009–Cys1018, Cys1025–Cys1036, Cys1030–Cys1045, Cys1047–Cys1056, Cys1063–Cys1074, Cys1068–Cys1083, Cys1085–Cys1094, Cys1101–Cys1122, Cys1116–Cys1131, Cys1133–Cys1142, Cys1149–Cys1160, Cys1154–Cys1169, Cys1171–Cys1180, Cys1187–Cys1198, Cys1192–Cys1207, Cys1209–Cys1218, Cys1238–Cys1253, Cys1255–Cys1264, Cys1271–Cys1284, Cys1276–Cys1293, Cys1295–Cys1304, Cys1311–Cys1322, Cys1316–Cys1334, Cys1336–Cys1345, Cys1352–Cys1363, Cys1357–Cys1372, Cys1374–Cys1383, Cys1391–Cys1403, Cys1397–Cys1414, Cys1416–Cys1425, Cys1449–Cys1472, Cys1454–Cys1467, and Cys1463–Cys1479. An O-linked (Glc...) serine glycan is attached at Ser496. 2 residues coordinate Ca(2+): Asp507 and Lys508. The region spanning Asp528–Glu564 is the EGF-like 14; calcium-binding domain. A glycan (O-linked (Glc...) serine) is linked at Ser534. The EGF-like 15; calcium-binding domain maps to Asp566 to Glu601. Positions Asn603–Glu639 constitute an EGF-like 16; calcium-binding domain. Ser609 carries an O-linked (Glc...) serine glycan. O-linked (Fuc...) threonine glycosylation occurs at Thr617. One can recognise an EGF-like 17; calcium-binding domain in the interval Asn641–Asn676. O-linked (Glc...) serine glycosylation is present at Ser647. Residues Asn678–Leu714 form the EGF-like 18; calcium-binding domain. An O-linked (Fuc...) threonine glycan is attached at Thr692. The EGF-like 19; calcium-binding domain occupies Glu716 to Asp751. O-linked (Glc...) serine glycosylation is present at Ser722. An EGF-like 20 domain is found at Asn753–Gln789. An O-linked (Glc...) serine glycan is attached at Ser759. O-linked (Fuc...) threonine glycosylation occurs at Thr767. O-linked (GlcNAc) serine glycosylation is present at Ser784. The region spanning Asn791–Glu827 is the EGF-like 21; calcium-binding domain. O-linked (Glc...) serine glycosylation is present at Ser797. The O-linked (Fuc...) threonine glycan is linked to Thr805. One can recognise an EGF-like 22 domain in the interval Val829 to Glu867. An EGF-like 23; calcium-binding domain is found at Asp869–Glu905. Residues Asp907–Glu943 enclose the EGF-like 24 domain. The O-linked (Fuc) serine glycan is linked to Ser921. Positions Asp945–Glu981 constitute an EGF-like 25; calcium-binding domain. A glycan (O-linked (Glc...) serine) is linked at Ser951. An N-linked (GlcNAc...) asparagine glycan is attached at Asn959. EGF-like domains follow at residues Asn983–Gln1019, Asp1021–Gln1057, Leu1059–Asp1095, Pro1097–Glu1143, and Leu1145–Ser1181. Thr997 carries an O-linked (Fuc...) threonine glycan. A glycan (O-linked (Glc...) serine) is linked at Ser1027. O-linked (Fuc...) threonine glycosylation is present at Thr1035. An O-linked (Glc...) serine glycan is attached at Ser1065. O-linked (Fuc...) threonine glycosylation occurs at Thr1159. N-linked (GlcNAc...) asparagine glycosylation is present at Asn1179. Residues Glu1183–Glu1219 form the EGF-like 31; calcium-binding domain. Ser1189 carries an O-linked (Glc...) serine glycan. The O-linked (Fuc...) threonine glycan is linked to Thr1197. The region spanning Asn1221–Glu1265 is the EGF-like 32; calcium-binding domain. N-linked (GlcNAc...) asparagine glycosylation is present at Asn1241. EGF-like domains are found at residues Asp1267–Glu1305, Val1307–Glu1346, Asp1348–Gln1384, and Ala1387–His1426. A glycan (O-linked (Glc...) serine) is linked at Ser1273. A glycan (O-linked (Fuc...) threonine) is linked at Thr1362. O-linked (GlcNAc...) threonine glycosylation is present at Thr1379. An O-linked (Fuc...) threonine; alternate glycan is attached at Thr1402. The O-linked (GalNAc...) threonine; alternate glycan is linked to Thr1402. LNR repeat units lie at residues Cys1449–Asn1489, Cys1490–Leu1531, and Tyr1532–Ala1571. Ca(2+) contacts are provided by Asp1457, Asn1460, Asp1475, and Asp1478. An N-linked (GlcNAc...) asparagine glycan is attached at Asn1489. 5 disulfides stabilise this stretch: Cys1490–Cys1514, Cys1496–Cys1509, Cys1505–Cys1521, Cys1536–Cys1549, and Cys1545–Cys1561. N-linked (GlcNAc...) asparagine glycosylation is present at Asn1587. Thr1725 is a glycosylation site (O-linked (GalNAc...) threonine). Positions Pro1728–Arg1760 are interaction with PSEN1. Residues Phe1736–Leu1756 traverse the membrane as a helical segment. Residues Ser1757–Lys2555 are Cytoplasmic-facing. Lys1759 is covalently cross-linked (Glycyl lysine isopeptide (Lys-Gly) (interchain with G-Cter in ubiquitin)). The segment at Lys1780–Asp1808 is disordered. Position 1861 is a phosphothreonine (Thr1861). 6 ANK repeats span residues Thr1927–Ile1956, Met1960–Ala1990, Asp1994–Ala2023, Leu2027–Met2056, Arg2060–Ile2089, and Arg2095–Pro2122. An HIF1AN-binding region spans residues Leu1947–Asn1955. Asn1955 carries the post-translational modification (3S)-3-hydroxyasparagine; by HIF1AN; partial. The tract at residues Leu2014–Asn2022 is HIF1AN-binding. (3S)-3-hydroxyasparagine; by HIF1AN is present on Asn2022. Disordered regions lie at residues Pro2151–Ser2194, Leu2379–Gly2447, and Thr2483–Lys2555. The segment covering Leu2379–Leu2408 has biased composition (low complexity). Over residues Thr2483–Leu2502 the composition is skewed to polar residues. A compositionally biased stretch (low complexity) spans Pro2512–Ser2527. Positions Asn2528–Ile2547 are enriched in polar residues.

Belongs to the NOTCH family. Heterodimer of a C-terminal fragment N(TM) and an N-terminal fragment N(EC) which are probably linked by disulfide bonds. Interacts with DNER, DTX1, DTX2 and RBPJ/RBPSUH. Also interacts with MAML1, MAML2 and MAML3 which act as transcriptional coactivators for NOTCH1. The NOTCH1 intracellular domain interacts with SNW1; the interaction involves multimerized NOTCH1 NICD and is implicated in a formation of an intermediate preactivation complex which associates with DNA-bound CBF-1/RBPJ. The activated membrane-bound form interacts with AAK1 which promotes NOTCH1 stabilization. Forms a trimeric complex with FBXW7 and SGK1. Interacts with HIF1AN. HIF1AN negatively regulates the function of notch intracellular domain (NICD), accelerating myogenic differentiation. Interacts (via NICD) with SNAI1 (via zinc fingers); the interaction induces SNAI1 degradation via MDM2-mediated ubiquitination and inhibits SNAI1-induced cell invasion. Interacts (via NICD) with MDM2A. Interacts (via NICD) with BCL6; the interaction decreases MAML1 recruitment by NOTCH1 NICD on target genes DNA and inhibits NOTCH1 transactivation activity. Interacts with THBS4. Interacts (via the EGF-like repeat region) with CCN3 (via CTCK domain). Interacts (via EGF-like domains) with DLL4 (via N-terminal DSL and MNNL domains). Interacts with ZMIZ1. Interacts (via NICD domain) with MEGF10 (via the cytoplasmic domain). Interacts with DLL1 and JAG1. Interacts (via NICD domain) with PRAG1. Forms a complex with PRAG1, N1ICD and MAML1, in a MAML1-dependent manner. Interacts (via transmembrane region) with PSEN1; the interaction is direct. Interacts with ZFP64. Synthesized in the endoplasmic reticulum as an inactive form which is proteolytically cleaved by a furin-like convertase in the trans-Golgi network before it reaches the plasma membrane to yield an active, ligand-accessible form. Cleavage results in a C-terminal fragment N(TM) and a N-terminal fragment N(EC). Following ligand binding, it is cleaved by ADAM17 to yield a membrane-associated intermediate fragment called notch extracellular truncation (NEXT). Following endocytosis, this fragment is then cleaved by one of the catalytic subunits of gamma-secretase (PSEN1 or PSEN2), to release a Notch-derived peptide containing the intracellular domain (NICD) from the membrane. Post-translationally, phosphorylated. In terms of processing, O-glycosylated on the EGF-like domains. O-glucosylated at Ser-435 by KDELC1 and KDELC2. Contains both O-linked fucose and O-linked glucose in the EGF-like domains 11, 12 and 13, which are interacting with the residues on DLL4. O-linked glycosylation by GALNT11 is involved in determination of left/right symmetry: glycosylation promotes activation of NOTCH1, possibly by promoting cleavage by ADAM17, modulating the balance between motile and immotile (sensory) cilia at the left-right organiser (LRO). MFNG-, RFNG- and LFNG-mediated modification of O-fucose residues at specific EGF-like domains results in inhibition of its activation by JAG1 and enhancement of its activation by DLL1 via an increased binding to DLL1. Ubiquitinated. Undergoes 'Lys-29'-linked polyubiquitination by ITCH; promotes the lysosomal degradation of non-activated internalized NOTCH1. Deubiquitination by USP12 is required for transport of internalized non-activated receptor from late endosomes to lysosomes for degradation. Monoubiquitination at Lys-1759 is required for activation by gamma-secretase cleavage, it promotes interaction with AAK1, which stabilizes it. Deubiquitination by EIF3F is necessary for nuclear import of activated Notch. Post-translationally, hydroxylated at Asn-1955 by HIF1AN. Hydroxylated at Asn-2022 by HIF1AN. Hydroxylation reduces affinity for HI1AN and may thus indirectly modulate negative regulation of NICD. In fetal tissues most abundant in spleen, brain stem and lung. Also present in most adult tissues where it is found mainly in lymphoid tissues.

The protein localises to the cell membrane. Its subcellular location is the late endosome membrane. It is found in the nucleus. Its function is as follows. Functions as a receptor for membrane-bound ligands Jagged-1 (JAG1), Jagged-2 (JAG2) and Delta-1 (DLL1) to regulate cell-fate determination. Upon ligand activation through the released notch intracellular domain (NICD) it forms a transcriptional activator complex with RBPJ/RBPSUH and activates genes of the enhancer of split locus. Affects the implementation of differentiation, proliferation and apoptotic programs. Involved in angiogenesis; negatively regulates endothelial cell proliferation and migration and angiogenic sprouting. Involved in the maturation of both CD4(+) and CD8(+) cells in the thymus. Important for follicular differentiation and possibly cell fate selection within the follicle. During cerebellar development, functions as a receptor for neuronal DNER and is involved in the differentiation of Bergmann glia. Represses neuronal and myogenic differentiation. May play an essential role in postimplantation development, probably in some aspect of cell specification and/or differentiation. May be involved in mesoderm development, somite formation and neurogenesis. May enhance HIF1A function by sequestering HIF1AN away from HIF1A. Required for the THBS4 function in regulating protective astrogenesis from the subventricular zone (SVZ) niche after injury. Involved in determination of left/right symmetry by modulating the balance between motile and immotile (sensory) cilia at the left-right organiser (LRO). In Homo sapiens (Human), this protein is Neurogenic locus notch homolog protein 1 (NOTCH1).